The sequence spans 437 residues: Argininosuccinate lyase (437 aa).

This sequence belongs to the lyase 1 family. Argininosuccinate lyase subfamily.

The protein localises to the cytoplasm. The enzyme catalyses 2-(N(omega)-L-arginino)succinate = fumarate + L-arginine. It participates in amino-acid biosynthesis; L-arginine biosynthesis; L-arginine from L-ornithine and carbamoyl phosphate: step 3/3. The chain is Argininosuccinate lyase from Clostridium acetobutylicum (strain ATCC 824 / DSM 792 / JCM 1419 / IAM 19013 / LMG 5710 / NBRC 13948 / NRRL B-527 / VKM B-1787 / 2291 / W).